A 110-amino-acid chain; its full sequence is Large ribosomal subunit protein uL24 (110 aa).

This sequence belongs to the universal ribosomal protein uL24 family. Part of the 50S ribosomal subunit.

Its function is as follows. One of two assembly initiator proteins, it binds directly to the 5'-end of the 23S rRNA, where it nucleates assembly of the 50S subunit. Functionally, one of the proteins that surrounds the polypeptide exit tunnel on the outside of the subunit. This chain is Large ribosomal subunit protein uL24, found in Desulfovibrio desulfuricans (strain ATCC 27774 / DSM 6949 / MB).